The chain runs to 486 residues: MELRDLIGALEAPMLMGADNVDITNIQSDSRRVTKGSLFVAVRGTAVDGHAYMDSAIEKGAVAIVCEETPSYLEGRCSFIVVKDSAEALGLLVSRWYGDPSRKLMLVGVTGTNGKTTIATLLYEMFRKMGHKVGLLSTVCNYIDGEAVPTDHTTPDPLTLHSLMARMVEAGCEYAFMEVSSHSIDQRRISGLSFDGGIFTNLTRDHLDYHKTVENYLKAKKKFFDDLPAGTFALTNADDKSGLVMLQNTKAKKLTYSLRTLADFKGKILESHFEGTDLIINGREVMVHFVGRFNAYNLLAVYGAAVSLGKDPEEVLIVLSTLRSVSGRFETIQSPLGYTAIVDYAHTPDALTNVLNGIHEVLDGKGRIITVVGAGGNRDKGKRPLMAKEAVKLSDQVILTSDNPRFEEPDDIINDMVAGLTKMDMERTLCITDRTQAIKTATMLAKKGDVILVAGKGHEDYQEIKGVKQHFDDREKLREIFSTQQS.

S30 contributes to the UDP-N-acetyl-alpha-D-muramoyl-L-alanyl-D-glutamate binding site. G111 to T117 is an ATP binding site. UDP-N-acetyl-alpha-D-muramoyl-L-alanyl-D-glutamate-binding positions include T153 to T154, S180, Q186, and R188. N6-carboxylysine is present on K220. Residues R378, D402–R405, G455, and E459 each bind meso-2,6-diaminopimelate. The Meso-diaminopimelate recognition motif signature appears at D402–R405.

It belongs to the MurCDEF family. MurE subfamily. The cofactor is Mg(2+). Carboxylation is probably crucial for Mg(2+) binding and, consequently, for the gamma-phosphate positioning of ATP.

The protein resides in the cytoplasm. It catalyses the reaction UDP-N-acetyl-alpha-D-muramoyl-L-alanyl-D-glutamate + meso-2,6-diaminopimelate + ATP = UDP-N-acetyl-alpha-D-muramoyl-L-alanyl-gamma-D-glutamyl-meso-2,6-diaminopimelate + ADP + phosphate + H(+). It functions in the pathway cell wall biogenesis; peptidoglycan biosynthesis. Catalyzes the addition of meso-diaminopimelic acid to the nucleotide precursor UDP-N-acetylmuramoyl-L-alanyl-D-glutamate (UMAG) in the biosynthesis of bacterial cell-wall peptidoglycan. The sequence is that of UDP-N-acetylmuramoyl-L-alanyl-D-glutamate--2,6-diaminopimelate ligase from Parabacteroides distasonis (strain ATCC 8503 / DSM 20701 / CIP 104284 / JCM 5825 / NCTC 11152).